Consider the following 211-residue polypeptide: NADH-quinone oxidoreductase subunit C (211 aa).

This sequence belongs to the complex I 30 kDa subunit family. In terms of assembly, NDH-1 is composed of 14 different subunits. Subunits NuoB, C, D, E, F, and G constitute the peripheral sector of the complex.

The protein resides in the cell inner membrane. It catalyses the reaction a quinone + NADH + 5 H(+)(in) = a quinol + NAD(+) + 4 H(+)(out). In terms of biological role, NDH-1 shuttles electrons from NADH, via FMN and iron-sulfur (Fe-S) centers, to quinones in the respiratory chain. The immediate electron acceptor for the enzyme in this species is believed to be ubiquinone. Couples the redox reaction to proton translocation (for every two electrons transferred, four hydrogen ions are translocated across the cytoplasmic membrane), and thus conserves the redox energy in a proton gradient. The chain is NADH-quinone oxidoreductase subunit C from Azorhizobium caulinodans (strain ATCC 43989 / DSM 5975 / JCM 20966 / LMG 6465 / NBRC 14845 / NCIMB 13405 / ORS 571).